The following is a 292-amino-acid chain: Probable endonuclease 4 (292 aa).

Residues histidine 69, histidine 109, glutamate 145, aspartate 179, histidine 182, histidine 216, aspartate 229, histidine 231, and glutamate 261 each coordinate Zn(2+).

Belongs to the AP endonuclease 2 family. The cofactor is Zn(2+).

The enzyme catalyses Endonucleolytic cleavage to 5'-phosphooligonucleotide end-products.. Its function is as follows. Endonuclease IV plays a role in DNA repair. It cleaves phosphodiester bonds at apurinic or apyrimidinic (AP) sites, generating a 3'-hydroxyl group and a 5'-terminal sugar phosphate. The sequence is that of Probable endonuclease 4 from Desulfotalea psychrophila (strain LSv54 / DSM 12343).